The following is a 177-amino-acid chain: uncharacterized protein (177 aa).

2 stretches are compositionally biased toward low complexity: residues 78-93 and 120-130; these read NNNN…NTNN and SDVNSNNNNGN. Residues 78–146 are disordered; it reads NNNNNNNNTI…NKKLKKDGTN (69 aa). Basic residues predominate over residues 131-146; that stretch reads HQKKKINKKLKKDGTN.

This is an uncharacterized protein from Dictyostelium discoideum (Social amoeba).